The following is a 621-amino-acid chain: 1-deoxy-D-xylulose-5-phosphate synthase (621 aa).

Residues His-80 and Gly-121–Ser-123 each bind thiamine diphosphate. Residue Asp-152 participates in Mg(2+) binding. Residues Gly-153 to Ala-154, Asn-181, Tyr-288, and Glu-370 each bind thiamine diphosphate. A Mg(2+)-binding site is contributed by Asn-181.

It belongs to the transketolase family. DXPS subfamily. Homodimer. The cofactor is Mg(2+). Thiamine diphosphate is required as a cofactor.

The enzyme catalyses D-glyceraldehyde 3-phosphate + pyruvate + H(+) = 1-deoxy-D-xylulose 5-phosphate + CO2. The protein operates within metabolic intermediate biosynthesis; 1-deoxy-D-xylulose 5-phosphate biosynthesis; 1-deoxy-D-xylulose 5-phosphate from D-glyceraldehyde 3-phosphate and pyruvate: step 1/1. Functionally, catalyzes the acyloin condensation reaction between C atoms 2 and 3 of pyruvate and glyceraldehyde 3-phosphate to yield 1-deoxy-D-xylulose-5-phosphate (DXP). The protein is 1-deoxy-D-xylulose-5-phosphate synthase of Erwinia tasmaniensis (strain DSM 17950 / CFBP 7177 / CIP 109463 / NCPPB 4357 / Et1/99).